The primary structure comprises 706 residues: Zinc finger CCCH domain-containing protein 56 (706 aa).

ANK repeat units follow at residues 83–113 and 118–150; these read EQRT…ELNL and DKST…DPNI. Residues 211-221 show a composition bias toward low complexity; sequence SSLLSLDSVSS. The tract at residues 211–235 is disordered; that stretch reads SSLLSLDSVSSPTKPHGTDVTFASE. C3H1-type zinc fingers lie at residues 302 to 324 and 332 to 356; these read PCPD…HGVF and QYRT…HANE. Disordered regions lie at residues 396–427, 545–616, and 652–692; these read PSAA…QQNI, SPKN…QTHG, and QMLK…TRES. Polar residues-rich tracts occupy residues 397-427 and 545-560; these read SAAQ…QQNI and SPKN…QASS. Phosphoserine is present on Ser-568. The segment covering 580–592 has biased composition (low complexity); it reads SRSLSSRDFGSSL. Polar residues-rich tracts occupy residues 600 to 616, 652 to 667, and 677 to 686; these read DSGS…QTHG, QMLK…NRVV, and QGGSSVNPHN.

The sequence is that of Zinc finger CCCH domain-containing protein 56 from Arabidopsis thaliana (Mouse-ear cress).